Here is a 122-residue protein sequence, read N- to C-terminus: UPF0145 protein BceJ2315_57450 (122 aa).

It belongs to the UPF0145 family.

The sequence is that of UPF0145 protein BceJ2315_57450 from Burkholderia cenocepacia (strain ATCC BAA-245 / DSM 16553 / LMG 16656 / NCTC 13227 / J2315 / CF5610) (Burkholderia cepacia (strain J2315)).